Here is a 707-residue protein sequence, read N- to C-terminus: MSQRRLFVTTALPYANGNFHIGHIMEYIQADIWVRYQRMQGNAVNFVGADDAHGAPIMIAAEKAGKTPQQFVADIASGRKPYLDGFHISFDNWSSTDSPENHELARQIYRDLRDNPQGSLIETKTIEQFFDPEKNMFLPDRFIKGECPKCHAKDQYGDNCEVCGAVYAPTDLINPYSALSGVTPVLKSSEHFFFKLSDARCVEFLESWTQDGKLQPEVANKVKEWFSVRENADGTQSEGLGDWDISRDAPYFGIEIPDAPGKYFYVWLDAPVGYLASLKNLLDRRGESYDDYMADPKLEQYHFIGKDIVTFHTLFWPAMLHFSGRKTPDNIFVHGFLTVNNGEKMSKSRGTGLDPLKYLSLGMNPEWLRYYLAAKLNARNEDIDFNADDFMARVNSDLVGKFINIASRAAGFLTKRFDGKIGDASGDFPNPDGQGYPSLAISEIGACAAEISELYEQRELGKAMRKIMEIADGLNSDWDAAQPWKLAKSEEPQQLARLQRICSNTIEGFRLLTLYLKPVLPALAIEVESFLKIDPLNFSDATKALPKGHPIGDYKHLMQRVDVKQLDALFEPPAQDTPAQAAIETVAPGGEDIAPAITIDDFAKVDLRIAKIVNCEAVEGSTKLLRLTLDAGEGRMRNVFSGIASSYRPADLIGKHTVLVANLAPRKMKFGISEGMVLAASHADEKSNPGIYVLEPLPGATPGMRIH.

Residues 13–23 (PYANGNFHIGH) carry the 'HIGH' region motif. Cysteine 147, cysteine 150, cysteine 160, and cysteine 163 together coordinate Zn(2+). Residues 344–348 (KMSKS) carry the 'KMSKS' region motif. ATP is bound at residue lysine 347. The region spanning 601–707 (DFAKVDLRIA…PGATPGMRIH (107 aa)) is the tRNA-binding domain.

Belongs to the class-I aminoacyl-tRNA synthetase family. MetG type 1 subfamily. As to quaternary structure, homodimer. It depends on Zn(2+) as a cofactor.

It localises to the cytoplasm. It carries out the reaction tRNA(Met) + L-methionine + ATP = L-methionyl-tRNA(Met) + AMP + diphosphate. Functionally, is required not only for elongation of protein synthesis but also for the initiation of all mRNA translation through initiator tRNA(fMet) aminoacylation. This Polaromonas naphthalenivorans (strain CJ2) protein is Methionine--tRNA ligase.